The chain runs to 643 residues: RNA-binding protein MEX3D (643 aa).

2 disordered regions span residues 1–48 and 61–92; these read MPGS…DAAA and GLGG…APPD. Over residues 18–34 the composition is skewed to low complexity; that stretch reads TAGDPGHPHPALAGAED. The span at 83–92 shows a compositional bias: acidic residues; sequence CGEDEPAPPD. KH domains follow at residues 160 to 221 and 253 to 314; these read MTEC…KREI and QTTI…REEI. Disordered stretches follow at residues 357–427, 471–505, and 519–583; these read PHPG…GTAT, GAPA…GGLS, and VGAV…APGP. The span at 405-418 shows a compositional bias: gly residues; sequence GGSGNGGFTFGGDG. Threonine 491 carries the post-translational modification Phosphothreonine. Serine 495 is modified (phosphoserine). 3 stretches are compositionally biased toward low complexity: residues 495 to 505, 531 to 556, and 567 to 583; these read SPTLPEPGGLS, LPPF…SSTL, and PSTT…APGP. Residues 592 to 632 form an RING-type zinc finger; sequence CVVCSEGEAMAALVPCGHNLFCMDCAVRICGKSEPECPACR.

It is found in the cytoplasm. The protein localises to the nucleus. RNA binding protein, may be involved in post-transcriptional regulatory mechanisms. The polypeptide is RNA-binding protein MEX3D (Mex3d) (Mus musculus (Mouse)).